Here is a 145-residue protein sequence, read N- to C-terminus: Transcription antitermination protein NusB (145 aa).

Belongs to the NusB family.

In terms of biological role, involved in transcription antitermination. Required for transcription of ribosomal RNA (rRNA) genes. Binds specifically to the boxA antiterminator sequence of the ribosomal RNA (rrn) operons. The polypeptide is Transcription antitermination protein NusB (Burkholderia cenocepacia (strain HI2424)).